Consider the following 357-residue polypeptide: 3-isopropylmalate dehydrogenase (357 aa).

Residue 76-89 participates in NAD(+) binding; the sequence is GPQWDTIDPSLRPE. Arginine 96, arginine 106, arginine 134, and aspartate 224 together coordinate substrate. Residues aspartate 224, aspartate 248, and aspartate 252 each coordinate Mg(2+). 282-294 serves as a coordination point for NAD(+); it reads GSAPDIAGKGIAN.

This sequence belongs to the isocitrate and isopropylmalate dehydrogenases family. LeuB type 1 subfamily. As to quaternary structure, homodimer. Requires Mg(2+) as cofactor. Mn(2+) is required as a cofactor.

It is found in the cytoplasm. The catalysed reaction is (2R,3S)-3-isopropylmalate + NAD(+) = 4-methyl-2-oxopentanoate + CO2 + NADH. It participates in amino-acid biosynthesis; L-leucine biosynthesis; L-leucine from 3-methyl-2-oxobutanoate: step 3/4. In terms of biological role, catalyzes the oxidation of 3-carboxy-2-hydroxy-4-methylpentanoate (3-isopropylmalate) to 3-carboxy-4-methyl-2-oxopentanoate. The product decarboxylates to 4-methyl-2 oxopentanoate. The sequence is that of 3-isopropylmalate dehydrogenase from Xanthomonas oryzae pv. oryzae (strain MAFF 311018).